We begin with the raw amino-acid sequence, 312 residues long: Eukaryotic translation initiation factor 2 subunit 2 (312 aa).

Disordered stretches follow at residues 26–104 (AALG…NLDM) and 125–146 (ADQA…SSTW). Phosphoserine is present on Ser-44. Composition is skewed to acidic residues over residues 90–102 (AASE…EINL) and 125–142 (ADQA…DEDN). Ser-133 bears the Phosphoserine mark. Residue Thr-145 is modified to Phosphothreonine. The C4-type zinc finger occupies 260–284 (CHTCRSPETILQKDTRLFFLQCESC).

This sequence belongs to the eIF-2-beta/eIF-5 family. Eukaryotic translation initiation factor 2 eIF2 is a heterotrimeric complex composed of an alpha, a beta and a gamma subunit.

It is found in the cytoplasm. The protein resides in the cytosol. Its function is as follows. Component of the eIF2 complex that functions in the early steps of protein synthesis by forming a ternary complex with GTP and initiator tRNA. This complex binds to a 40S ribosomal subunit, followed by mRNA binding to form a 43S pre-initiation complex (43S PIC). Junction of the 60S ribosomal subunit to form the 80S initiation complex is preceded by hydrolysis of the GTP bound to eIF2 and release of an eIF2-GDP binary complex. In order for eIF2 to recycle and catalyze another round of initiation, the GDP bound to eIF2 must exchange with GTP by way of a reaction catalyzed by eIF2B. This is Eukaryotic translation initiation factor 2 subunit 2 from Drosophila melanogaster (Fruit fly).